The chain runs to 397 residues: 1-deoxy-D-xylulose 5-phosphate reductoisomerase (397 aa).

NADPH is bound by residues Thr-10, Gly-11, Ser-12, Ile-13, Gly-36, Asn-38, and Asn-128. Residue Lys-129 participates in 1-deoxy-D-xylulose 5-phosphate binding. Residue Glu-130 coordinates NADPH. Position 154 (Asp-154) interacts with Mn(2+). Residues Ser-155, Glu-156, Ser-180, and His-203 each coordinate 1-deoxy-D-xylulose 5-phosphate. Glu-156 is a binding site for Mn(2+). Residue Gly-209 participates in NADPH binding. 1-deoxy-D-xylulose 5-phosphate-binding residues include Asn-221, Lys-222, and Glu-225. Residue Glu-225 coordinates Mn(2+).

Belongs to the DXR family. The cofactor is Mg(2+). Requires Mn(2+) as cofactor.

It carries out the reaction 2-C-methyl-D-erythritol 4-phosphate + NADP(+) = 1-deoxy-D-xylulose 5-phosphate + NADPH + H(+). The protein operates within isoprenoid biosynthesis; isopentenyl diphosphate biosynthesis via DXP pathway; isopentenyl diphosphate from 1-deoxy-D-xylulose 5-phosphate: step 1/6. Catalyzes the NADPH-dependent rearrangement and reduction of 1-deoxy-D-xylulose-5-phosphate (DXP) to 2-C-methyl-D-erythritol 4-phosphate (MEP). The sequence is that of 1-deoxy-D-xylulose 5-phosphate reductoisomerase from Solibacter usitatus (strain Ellin6076).